Consider the following 186-residue polypeptide: Ribosome-recycling factor (186 aa).

This sequence belongs to the RRF family.

It localises to the cytoplasm. Functionally, responsible for the release of ribosomes from messenger RNA at the termination of protein biosynthesis. May increase the efficiency of translation by recycling ribosomes from one round of translation to another. This chain is Ribosome-recycling factor, found in Rickettsia bellii (strain OSU 85-389).